The sequence spans 400 residues: NADH-quinone oxidoreductase subunit D (400 aa).

It belongs to the complex I 49 kDa subunit family. In terms of assembly, NDH-1 is composed of 14 different subunits. Subunits NuoB, C, D, E, F, and G constitute the peripheral sector of the complex.

It localises to the cell inner membrane. The catalysed reaction is a quinone + NADH + 5 H(+)(in) = a quinol + NAD(+) + 4 H(+)(out). Its function is as follows. NDH-1 shuttles electrons from NADH, via FMN and iron-sulfur (Fe-S) centers, to quinones in the respiratory chain. The immediate electron acceptor for the enzyme in this species is believed to be a menaquinone. Couples the redox reaction to proton translocation (for every two electrons transferred, four hydrogen ions are translocated across the cytoplasmic membrane), and thus conserves the redox energy in a proton gradient. The chain is NADH-quinone oxidoreductase subunit D from Chlorobium phaeovibrioides (strain DSM 265 / 1930) (Prosthecochloris vibrioformis (strain DSM 265)).